The chain runs to 110 residues: Small ribosomal subunit protein bS16 (110 aa).

Positions 81–104 (VRPAEVLGKQKQEKERSAKKKDAA) are enriched in basic and acidic residues. The tract at residues 81–110 (VRPAEVLGKQKQEKERSAKKKDAAASETSE) is disordered.

This sequence belongs to the bacterial ribosomal protein bS16 family.

The chain is Small ribosomal subunit protein bS16 from Prochlorococcus marinus (strain NATL2A).